A 173-amino-acid polypeptide reads, in one-letter code: Tumor necrosis factor ligand superfamily member 18 (173 aa).

Residues 1–20 are Cytoplasmic-facing; that stretch reads MEEMPLRESSPQRAERCKKS. A helical; Signal-anchor for type II membrane protein membrane pass occupies residues 21–41; it reads WLLCIVALLLMLLCSLGTLIY. The THD domain maps to 40–166; sequence IYTSLKPTAI…TNTYWGIILM (127 aa). Residues 42 to 173 lie on the Extracellular side of the membrane; that stretch reads TSLKPTAIES…ILMPDLPFIS (132 aa). The cysteines at positions 52 and 72 are disulfide-linked. Asn74 carries N-linked (GlcNAc...) asparagine glycosylation.

Belongs to the tumor necrosis factor family. In terms of assembly, homotrimer. Homodimer. Post-translationally, N-glycosylated. As to expression, detected in immature and mature dendritic cells and in macrophages (at protein level). Detected in spleen, lung, heart, thymus, monocytes, macrophages, B-cells and dendritic cells.

Its subcellular location is the cell membrane. Its function is as follows. Cytokine that binds to TNFRSF18/AITR/GITR. Regulates T-cell responses. Can function as costimulator and lower the threshold for T-cell activation and T-cell proliferation. Important for interactions between activated T-lymphocytes and endothelial cells. Mediates activation of NF-kappa-B. Triggers increased phosphorylation of STAT1 and up-regulates expression of VCAM1 and ICAM1. Promotes leukocyte adhesion to endothelial cells. Regulates migration of monocytes from the splenic reservoir to sites of inflammation. The polypeptide is Tumor necrosis factor ligand superfamily member 18 (Tnfsf18) (Mus musculus (Mouse)).